A 317-amino-acid polypeptide reads, in one-letter code: UV DNA damage endonuclease (317 aa).

It belongs to the uve1/UvsE family.

Its function is as follows. Component in a DNA repair pathway. Removal of UV LIGHT damaged nucleotides. Recognizes pyrimidine dimers and cleave a phosphodiester bond immediately 5' to the lesion. This is UV DNA damage endonuclease from Bacillus mycoides (strain KBAB4) (Bacillus weihenstephanensis).